The primary structure comprises 216 residues: Octanoyltransferase (216 aa).

The 184-residue stretch at 33-216 (AATADELWIV…ANRLSTSLSR (184 aa)) folds into the BPL/LPL catalytic domain. Substrate contacts are provided by residues 72-79 (RGGEVTYH), 148-150 (ALG), and 162-164 (GVS). Cys-180 (acyl-thioester intermediate) is an active-site residue.

It belongs to the LipB family.

Its subcellular location is the cytoplasm. It carries out the reaction octanoyl-[ACP] + L-lysyl-[protein] = N(6)-octanoyl-L-lysyl-[protein] + holo-[ACP] + H(+). The protein operates within protein modification; protein lipoylation via endogenous pathway; protein N(6)-(lipoyl)lysine from octanoyl-[acyl-carrier-protein]: step 1/2. Catalyzes the transfer of endogenously produced octanoic acid from octanoyl-acyl-carrier-protein onto the lipoyl domains of lipoate-dependent enzymes. Lipoyl-ACP can also act as a substrate although octanoyl-ACP is likely to be the physiological substrate. This Janthinobacterium sp. (strain Marseille) (Minibacterium massiliensis) protein is Octanoyltransferase.